A 343-amino-acid polypeptide reads, in one-letter code: Armadillo repeat-containing protein 10 (343 aa).

Residues 5-27 (RGAGWVAAGLLLGAGACYCIYRL) traverse the membrane as a helical segment. Positions 43-83 (SKSAGALEEGTSEGQLCGRSARPQTGGTWESQWSKTSQPED) are disordered. A Phosphoserine modification is found at Ser-45. Glu-50 is subject to Phosphothreonine. Residues 64 to 82 (RPQTGGTWESQWSKTSQPE) are compositionally biased toward polar residues. The residue at position 85 (Thr-85) is a Phosphothreonine. The stretch at 138–180 (GGIPIVANKINHSNQSIKEKALNALNNLSVNVENQIKIKIYIS) is one ARM repeat.

In terms of assembly, interacts with the DNA-binding domain of p53/TP53. As to expression, expressed in all tissues tested with higher expression in placenta, liver, kidney, heart and brain.

The protein resides in the endoplasmic reticulum membrane. The protein localises to the mitochondrion outer membrane. Its function is as follows. May play a role in cell survival and cell growth. May suppress the transcriptional activity of p53/TP53. The sequence is that of Armadillo repeat-containing protein 10 (ARMC10) from Homo sapiens (Human).